The sequence spans 429 residues: Zinc finger protein 385C (429 aa).

The Matrin-type 1 zinc finger occupies 77–107; the sequence is ISCNICHLRFNSANQAEAHYKGHRHARKLKA. 3 disordered regions span residues 109 to 224, 258 to 295, and 311 to 340; these read EAAK…GRGE, GHQG…GPSP, and QLKQ…NKLQ. Over residues 125 to 146 the composition is skewed to low complexity; it reads TVVSSASPPASGSPGTPQSKGP. Residues 147–162 are compositionally biased toward pro residues; it reads ASPPLGPSLQLPPTPD. Over residues 181 to 193 the composition is skewed to low complexity; the sequence is CDAAASSSSSSCP. Residues 225–259 form a Matrin-type 2 zinc finger; that stretch reads KGRLYCPTCKVTVNSASQLQAHNTGAKHRWMVEGH. The span at 262 to 284 shows a compositional bias: basic residues; that stretch reads APRRGRGRPVSRGGTGHKTKRVI. Residues 297–327 form a Matrin-type 3 zinc finger; that stretch reads FHCALCQLHVNSETQLKQHMSSRRHKDRLAG.

Its subcellular location is the nucleus. In Mus musculus (Mouse), this protein is Zinc finger protein 385C.